A 430-amino-acid chain; its full sequence is Adenylosuccinate synthetase (430 aa).

GTP is bound by residues 12 to 18 and 40 to 42; these read GDEGKGK and GHT. Catalysis depends on aspartate 13, which acts as the Proton acceptor. Aspartate 13 and glycine 40 together coordinate Mg(2+). IMP-binding positions include 13-16, 38-41, threonine 129, arginine 143, glutamine 224, threonine 239, and arginine 303; these read DEGK and NAGH. The Proton donor role is filled by histidine 41. 299-305 lines the substrate pocket; that stretch reads ATTGRRR. Residues arginine 305, 331 to 333, and 413 to 415 contribute to the GTP site; these read KLD and SVG.

Belongs to the adenylosuccinate synthetase family. As to quaternary structure, homodimer. The cofactor is Mg(2+).

The protein resides in the cytoplasm. It catalyses the reaction IMP + L-aspartate + GTP = N(6)-(1,2-dicarboxyethyl)-AMP + GDP + phosphate + 2 H(+). Its pathway is purine metabolism; AMP biosynthesis via de novo pathway; AMP from IMP: step 1/2. Its function is as follows. Plays an important role in the de novo pathway of purine nucleotide biosynthesis. Catalyzes the first committed step in the biosynthesis of AMP from IMP. In Desulfatibacillum aliphaticivorans, this protein is Adenylosuccinate synthetase.